The primary structure comprises 823 residues: High affinity cAMP-specific and IBMX-insensitive 3',5'-cyclic phosphodiesterase 8A (823 aa).

Positions 1–55 (MGCAPSIHTSENRTFSHSDGEDEDVDVDVPGPAPRSIQRWSTAPGLVEPQPRDNG) are disordered. Basic and acidic residues predominate over residues 10-19 (SENRTFSHSD). The PAS domain maps to 209–280 (ACNSVFTALE…AINSCVTVDK (72 aa)). Positions 283-325 (QGVYHTQKKNGDNIQQNVKIIPVIGQGGKIRHYVSIIRVCNGN) constitute a PAC domain. The disordered stretch occupies residues 338–373 (DSQTDNQAGKHKDRRKHSMDAKAVSSRTSDVSSQRR). Phosphoserine; by PKA is present on serine 355. Phosphoserine is present on residues serine 382 and serine 452. Tyrosine 456 is modified (phosphotyrosine). The PDEase domain occupies 475–814 (SLHDVPPRIA…RYWKGLDEKK (340 aa)). The active-site Proton donor is histidine 551. Residues histidine 555, histidine 591, aspartate 592, and aspartate 720 each contribute to the a divalent metal cation site.

Belongs to the cyclic nucleotide phosphodiesterase family. PDE8 subfamily. As to quaternary structure, interacts with RAF1. The interaction promotes RAF1 activity. A divalent metal cation serves as cofactor. Phosphorylated at Ser-355 by PKA under elevated cAMP conditions, this enhances catalytic activity. As to expression, expressed in multiple tissues, with highest levels in testis, followed by liver, heart, skeletal muscle, and kidney. In the testis, expressed specifically in the seminiferous tubules, in postmitotic pachytene spermatocytes. Low expression, if any, in lung, smooth muscle, pancreas, thyroid, thymus, submaxillary gland, spleen, prostate, epididymus, uterus.

The catalysed reaction is 3',5'-cyclic AMP + H2O = AMP + H(+). It participates in purine metabolism; 3',5'-cyclic AMP degradation; AMP from 3',5'-cyclic AMP: step 1/1. With respect to regulation, inhibited by dipyridimole. Insensitive to selective PDE inhibitor rolipram and to the non-selective inhibitor, IBMX. Hydrolyzes the second messenger cAMP, which is a key regulator of many important physiological processes. May be involved in maintaining basal levels of the cyclic nucleotide and/or in the cAMP regulation of germ cell development. Binding to RAF1 reduces RAF1 'Ser-259' inhibitory-phosphorylation and stimulates RAF1-dependent EGF-activated ERK-signaling. Protects against cell death induced by hydrogen peroxide and staurosporine. The polypeptide is High affinity cAMP-specific and IBMX-insensitive 3',5'-cyclic phosphodiesterase 8A (Pde8a) (Mus musculus (Mouse)).